The following is a 492-amino-acid chain: Solute carrier family 2, facilitated glucose transporter member 1 (492 aa).

Met-1 carries the N-acetylmethionine modification. At 1–11 (MDPSSKKVTGR) the chain is on the cytoplasmic side. A helical transmembrane segment spans residues 12-33 (LMLAVGGAVLGSLQFGYNTGVI). The Extracellular portion of the chain corresponds to 34-66 (NAPQKVIEEFYNQTWNHRYGEPIPSTTLTTLWS). Residue Asn-45 is glycosylated (N-linked (GlcNAc...) asparagine). Residues 67 to 87 (LSVAIFSVGGMIGSFSVGLFV) traverse the membrane as a helical segment. Over 88-90 (NRF) the chain is Cytoplasmic. A helical transmembrane segment spans residues 91–112 (GRRNSMLMMNLLAFVAAVLMGF). Over 113 to 120 (SKLGKSFE) the chain is Extracellular. Residues 121–144 (MLILGRFIIGVYCGLTTGFVPMYV) form a helical membrane-spanning segment. The Cytoplasmic segment spans residues 145 to 155 (GEVSPTALRGA). Residues 156 to 176 (LGTLHQLGIVVGILIAQVFGL) form a helical membrane-spanning segment. Gln-161 is a binding site for D-glucose. Over 177-185 (DSIMGNADL) the chain is Extracellular. A helical membrane pass occupies residues 186-206 (WPLLLSVIFIPALLQCILLPF). At 207–271 (CPESPRFLLI…LFRSPAYRQP (65 aa)) the chain is on the cytoplasmic side. Phosphoserine is present on Ser-226. A helical membrane pass occupies residues 272–293 (ILIAVVLQLSQQLSGINAVFYY). D-glucose is bound by residues 282–283 (QQ) and Asn-288. Residues 294-306 (STSIFEKAGVQQP) lie on the Extracellular side of the membrane. Residues 307–328 (VYATIGSGIVNTAFTVVSLFVV) form a helical membrane-spanning segment. Asn-317 lines the D-glucose pocket. Topologically, residues 329 to 334 (ERAGRR) are cytoplasmic. A helical membrane pass occupies residues 335-355 (TLHLIGLAGMAGCAVLMTIAL). Topologically, residues 356 to 365 (ALLERLPWMS) are extracellular. A helical transmembrane segment spans residues 366–388 (YLSIVAIFGFVAFFEVGPGPIPW). Positions 380 and 388 each coordinate D-glucose. At 389-401 (FIVAELFSQGPRP) the chain is on the cytoplasmic side. Residues 402–422 (AAIAVAGFSNWTSNFIVGMCF) form a helical membrane-spanning segment. The Extracellular portion of the chain corresponds to 423–429 (QYVEQLC). The chain crosses the membrane as a helical span at residues 430-450 (GPYVFIIFTVLLVLFFIFTYF). Residues 451-492 (KVPETKGRTFDEIASGFRQGGASQSDKTPEELFHPLGADSQV) lie on the Cytoplasmic side of the membrane. Residue Ser-465 is modified to Phosphoserine. Residues 468–492 (RQGGASQSDKTPEELFHPLGADSQV) are disordered. Thr-478 carries the phosphothreonine modification. Ser-490 carries the post-translational modification Phosphoserine.

It belongs to the major facilitator superfamily. Sugar transporter (TC 2.A.1.1) family. Glucose transporter subfamily. Found in a complex with ADD2, DMTN and SLC2A1. Interacts (via C-terminus cytoplasmic region) with DMTN isoform 2. Interacts with SNX27; the interaction is required when endocytosed to prevent degradation in lysosomes and promote recycling to the plasma membrane. Interacts with GIPC (via PDZ domain). Interacts with STOM. Interacts with SGTA (via Gln-rich region). Interacts with isoform 1 of BSG. Interacts with SMIM43; the interaction may promote SLC2A1-mediated glucose transport to meet the energy needs of mesendoderm differentiation. Phosphorylation at Ser-226 by PKC promotes glucose uptake by increasing cell membrane localization. As to expression, retina (at protein level).

It localises to the cell membrane. The protein resides in the photoreceptor inner segment. The catalysed reaction is D-glucose(out) = D-glucose(in). Its activity is regulated as follows. The uptake of glucose is inhibited by cytochalasin B. Glucose uptake is increased in response to phorbol ester 12-O-tetradecanoylphorbol-13-acetate (TPA) treatment: TPA-induced glucose uptake requires phosphorylation at Ser-226. Facilitative glucose transporter, which is responsible for constitutive or basal glucose uptake. Has a very broad substrate specificity; can transport a wide range of aldoses including both pentoses and hexoses. Most important energy carrier of the brain: present at the blood-brain barrier and assures the energy-independent, facilitative transport of glucose into the brain. In association with BSG and NXNL1, promotes retinal cone survival by increasing glucose uptake into photoreceptors. Required for mesendoderm differentiation. This is Solute carrier family 2, facilitated glucose transporter member 1 from Mus musculus (Mouse).